The primary structure comprises 347 residues: Fructose-1,6-bisphosphatase (347 aa).

AMP contacts are provided by residues 19 to 23 (ILQEQ) and 44 to 48 (SGELS). Residues Asp-85 and Glu-114 each contribute to the Mg(2+) site. AMP is bound at residue 127-128 (SY). Asp-133, Ile-135, and Asp-136 together coordinate Mg(2+). 136–139 (DGSS) serves as a coordination point for substrate. Lys-155 provides a ligand contact to AMP. Substrate is bound by residues 227–230 (NEGY), 258–263 (RYIGSM), Tyr-279, and 288–290 (KLR). Glu-294 lines the Mg(2+) pocket.

The protein belongs to the FBPase class 1 family. Homotetramer. Mg(2+) serves as cofactor.

The enzyme catalyses beta-D-fructose 1,6-bisphosphate + H2O = beta-D-fructose 6-phosphate + phosphate. It participates in carbohydrate biosynthesis; gluconeogenesis. Subject to complex allosteric regulation. The enzyme can assume an active R-state, or an inactive T-state. Intermediate conformations may exist. AMP acts as allosteric inhibitor. AMP binding affects the turnover of bound substrate and not the affinity for substrate. In Schizosaccharomyces pombe (strain 972 / ATCC 24843) (Fission yeast), this protein is Fructose-1,6-bisphosphatase (fbp1).